A 257-amino-acid polypeptide reads, in one-letter code: tRNA-cytidine(32) 2-sulfurtransferase (257 aa).

Positions Ser37–Ser42 match the PP-loop motif motif. Residues Cys112, Cys115, and Cys202 each contribute to the [4Fe-4S] cluster site.

Belongs to the TtcA family. In terms of assembly, homodimer. Mg(2+) serves as cofactor. Requires [4Fe-4S] cluster as cofactor.

The protein resides in the cytoplasm. It carries out the reaction cytidine(32) in tRNA + S-sulfanyl-L-cysteinyl-[cysteine desulfurase] + AH2 + ATP = 2-thiocytidine(32) in tRNA + L-cysteinyl-[cysteine desulfurase] + A + AMP + diphosphate + H(+). It functions in the pathway tRNA modification. Functionally, catalyzes the ATP-dependent 2-thiolation of cytidine in position 32 of tRNA, to form 2-thiocytidine (s(2)C32). The sulfur atoms are provided by the cysteine/cysteine desulfurase (IscS) system. The chain is tRNA-cytidine(32) 2-sulfurtransferase from Geobacter metallireducens (strain ATCC 53774 / DSM 7210 / GS-15).